The primary structure comprises 4731 residues: Dynein axonemal heavy chain 8 (4731 aa).

The segment at 1 to 145 (MESEEGNAEP…SKFRRSMTGI (145 aa)) is disordered. Positions 9-55 (EPPPPSEEAPPPVVEEAPPPLPPEDTAPPPPEEQAPPPEGDAAPPPT) are enriched in pro residues. Basic and acidic residues predominate over residues 66 to 75 (EAPHPEDPKL). Residues 94–106 (SDEEVTLPEDEES) show a composition bias toward acidic residues. The segment covering 122–133 (SVLSDGISQSSR) has biased composition (polar residues). Positions 145 to 169 (IPNLQETLKEKQARFREARENRKMK) form a coiled coil. Serine 917 carries the post-translational modification Phosphoserine. The tract at residues 1177-1201 (FQNNSRGSDQPPASGKPLKKEERSF) is disordered. A coiled-coil region spans residues 1543 to 1567 (DVDIEKINAELQEFQNRCRKLPRAL). 4 AAA regions span residues 2049-2271 (YQNE…VLRT), 2331-2550 (SAVD…KLSL), 2657-2910 (FYPT…IWQG), and 3021-3275 (QFNE…YRRR). Residues 2087–2094 (GPAGTGKT) and 2369–2376 (GPSGSGKT) contribute to the ATP site. Residues 3290-3587 (YKSIYTDKVK…MDLLNDADMC (298 aa)) are stalk. Coiled coils occupy residues 3313–3405 (DKLM…ALNT), 3531–3583 (LKAN…LLND), and 3836–3871 (RVILTEKQELESERVKLLEDVTFNKRKMKELEDNLL). 2 AAA regions span residues 3673–3903 (LVDP…EVSE) and 4118–4332 (ARKY…FIQN).

The protein belongs to the dynein heavy chain family. As to quaternary structure, consists of at least two heavy chains and a number of intermediate and light chains. Isoform 1 and/or isoform 2 are expressed in spermatocytes and mature sperm (at protein level). Testis-specific. Accumulates exclusively in mid to late spermatocytes.

Its subcellular location is the cytoplasm. It is found in the cytoskeleton. The protein localises to the flagellum axoneme. Its function is as follows. Force generating protein component of the outer dynein arms (ODAs) in the sperm flagellum. Produces force towards the minus ends of microtubules. Dynein has ATPase activity; the force-producing power stroke is thought to occur on release of ADP. Involved in sperm motility; implicated in sperm flagellar assembly. This Mus musculus (Mouse) protein is Dynein axonemal heavy chain 8 (Dnah8).